The following is a 133-amino-acid chain: MIDKIKKGYSLRELADYLDESDAIPKRGYKWHIASILVILKNPVLYGGFRWAGEILEGAFEGYISKKEFEQLQKMLHDRQNFKRRETSSIFIFQAKILCPNCGSRLTCERSIYFRKKDNKNVESNHYRCQHAP.

Positions 1-82 (MIDKIKKGYS…QKMLHDRQNF (82 aa)) form a DNA-binding region, recombinase.

This is an uncharacterized protein from Bacillus phage phi105 (Bacteriophage phi-105).